The sequence spans 67 residues: Large ribosomal subunit protein uL29 (67 aa).

The protein belongs to the universal ribosomal protein uL29 family.

This Clostridioides difficile (strain 630) (Peptoclostridium difficile) protein is Large ribosomal subunit protein uL29.